The chain runs to 94 residues: DNA-directed RNA polymerase subunit omega (94 aa).

The protein belongs to the RNA polymerase subunit omega family. As to quaternary structure, the RNAP catalytic core consists of 2 alpha, 1 beta, 1 beta' and 1 omega subunit. When a sigma factor is associated with the core the holoenzyme is formed, which can initiate transcription.

The catalysed reaction is RNA(n) + a ribonucleoside 5'-triphosphate = RNA(n+1) + diphosphate. Functionally, promotes RNA polymerase assembly. Latches the N- and C-terminal regions of the beta' subunit thereby facilitating its interaction with the beta and alpha subunits. This chain is DNA-directed RNA polymerase subunit omega, found in Bifidobacterium animalis subsp. lactis (strain AD011).